We begin with the raw amino-acid sequence, 122 residues long: Ribonuclease P protein component (122 aa).

It belongs to the RnpA family. Consists of a catalytic RNA component (M1 or rnpB) and a protein subunit.

The catalysed reaction is Endonucleolytic cleavage of RNA, removing 5'-extranucleotides from tRNA precursor.. Its function is as follows. RNaseP catalyzes the removal of the 5'-leader sequence from pre-tRNA to produce the mature 5'-terminus. It can also cleave other RNA substrates such as 4.5S RNA. The protein component plays an auxiliary but essential role in vivo by binding to the 5'-leader sequence and broadening the substrate specificity of the ribozyme. This is Ribonuclease P protein component from Oenococcus oeni (strain ATCC BAA-331 / PSU-1).